We begin with the raw amino-acid sequence, 298 residues long: Enoyl-CoA hydratase AKT6-1 (298 aa).

Positions M1–N23 are disordered.

Belongs to the enoyl-CoA hydratase/isomerase family.

Its pathway is mycotoxin biosynthesis. Its function is as follows. Enoyl-CoA hydratase; part of the gene clusters that mediate the biosynthesis of the host-selective toxins (HSTs) AK-toxins responsible for Japanese pear black spot disease by the Japanese pear pathotype. AK-toxins are esters of 9,10-epoxy 8-hydroxy 9-methyldecatrienoic acid (EDA). On cellular level, AK-toxins affect plasma membrane of susceptible cells and cause a sudden increase in loss of K(+) after a few minutes of toxin treatment. The acyl-CoA ligase AKT1, the hydrolase AKT2 and enoyl-CoA hydratase AKT3 are all involved in the biosynthesis of the AK-, AF- and ACT-toxin common 9,10-epoxy-8-hydroxy-9-methyl-decatrienoic acid (EDA) structural moiety. Part of the EDA biosynthesis occurs in the peroxisome since these 3 enzymes are localized in peroxisomes. The exact roles of the 3 enzymes, as well as of additional AK-toxin clusters enzymes, including AKT4, AKT6 and AKTS1, have still to be elucidated. The Cytochrome P450 monooxygenase AKT7 on the other side functions to limit production of EDA and AK-toxin, probably via the catalysis of a side reaction of EDA or its precursor. The chain is Enoyl-CoA hydratase AKT6-1 from Alternaria alternata (Alternaria rot fungus).